A 708-amino-acid polypeptide reads, in one-letter code: Leukotoxin translocation ATP-binding protein LktB (708 aa).

Residues 1–126 (MEANHQRNDL…ACYQGQLILV (126 aa)) enclose the Peptidase C39 domain. In terms of domain architecture, ABC transmembrane type-1 spans 155–437 (FLETLIVSIF…LAQLWQDFQQ (283 aa)). 5 consecutive transmembrane segments (helical) span residues 159 to 179 (LIVSIFLQIFALITPLFFQVV), 192 to 212 (LNIITVALAIVIIFEIVLSGL), 270 to 290 (ALTSVLDLLFSFIFFAVMWYY), 296 to 316 (LVILGSLPCYILWSIFISPIL), and 389 to 409 (VMVINLWLGAHLVISGDLSIG). The ABC transporter domain occupies 469 to 704 (ISFKNIRFRY…SNGLYSYLHQ (236 aa)). 503-510 (GRSGSGKS) serves as a coordination point for ATP.

The protein belongs to the ABC transporter superfamily. Protein-1 exporter (TC 3.A.1.109) family. As to quaternary structure, homodimer.

It localises to the cell inner membrane. The catalysed reaction is ATP + H2O + proteinSide 1 = ADP + phosphate + proteinSide 2.. In terms of biological role, part of the ABC transporter complex LktBD involved in leukotoxin export. Transmembrane domains (TMD) form a pore in the inner membrane and the ATP-binding domain (NBD) is responsible for energy generation. The polypeptide is Leukotoxin translocation ATP-binding protein LktB (lktB) (Mannheimia haemolytica (Pasteurella haemolytica)).